The sequence spans 160 residues: uncharacterized protein (160 aa).

This is an uncharacterized protein from Escherichia coli O157:H7.